An 844-amino-acid chain; its full sequence is Beta-mannosidase B (844 aa).

Residue glutamate 432 is the Proton donor of the active site. Asparagine 723 carries an N-linked (GlcNAc...) asparagine glycan.

It belongs to the glycosyl hydrolase 2 family. Beta-mannosidase B subfamily.

The catalysed reaction is Hydrolysis of terminal, non-reducing beta-D-mannose residues in beta-D-mannosides.. The protein operates within glycan metabolism; N-glycan degradation. Its function is as follows. Exoglycosidase that cleaves the single beta-linked mannose residue from the non-reducing end of beta-mannosidic oligosaccharides of various complexity and length. Prefers mannobiose over mannotriose and has no activity against polymeric mannan. Is also severely restricted by galactosyl substitutions at the +1 subsite. This Aspergillus flavus (strain ATCC 200026 / FGSC A1120 / IAM 13836 / NRRL 3357 / JCM 12722 / SRRC 167) protein is Beta-mannosidase B (mndB).